The chain runs to 917 residues: DNA topoisomerase 1 beta (917 aa).

The disordered stretch occupies residues 1 to 368; it reads MATEAFVKPV…SLPSGDGQKK (368 aa). The segment covering 32–63 has biased composition (polar residues); it reads RNSNTAATTNRPSPINNAMRNSAIGSTKSSPP. Residues 66 to 82 show a composition bias toward low complexity; sequence SPLTSPNRSASSSTRSS. A compositionally biased stretch (polar residues) spans 89 to 100; it reads PSSSSVQRSTLK. 2 stretches are compositionally biased toward basic and acidic residues: residues 102-116 and 134-149; these read PLRD…ERNG and DKPL…KEVT. The span at 150-170 shows a compositional bias: polar residues; that stretch reads KQPSSSGRGSTQQAVQKSNMR. Residues 177–187 show a composition bias toward basic and acidic residues; that stretch reads YTKKKVLDERA. The segment covering 189–205 has biased composition (polar residues); it reads MSSTVQTKTSVGTSSSK. Basic and acidic residues-rich tracts occupy residues 256–265 and 296–307; these read KLSEPARPVK and VKEDNSDGDDHV. Residue Ser-301 is modified to Phosphoserine. Positions 316–338 are enriched in low complexity; it reads DSSNNKSSSAKPSSSKMIASSSR. 3 interaction with DNA regions span residues 575 to 576, 638 to 643, and 729 to 731; these read KY, RAGNEK, and TAK. Residues 582–912 enclose the Topo IB-type catalytic domain; sequence SSSLKGQSDK…MDVDPEFRFC (331 aa). A coiled-coil region spans residues 779 to 858; that stretch reads VSKSHGAQVE…ERDMQTKEDM (80 aa). Tyr-870 (O-(3'-phospho-DNA)-tyrosine intermediate) is an active-site residue.

Belongs to the type IB topoisomerase family.

The protein localises to the nucleus. It catalyses the reaction ATP-independent breakage of single-stranded DNA, followed by passage and rejoining.. Its function is as follows. Releases the supercoiling and torsional tension of DNA introduced during the DNA replication and transcription by transiently cleaving and rejoining one strand of the DNA duplex. Introduces a single-strand break via transesterification at a target site in duplex DNA. The scissile phosphodiester is attacked by the catalytic tyrosine of the enzyme, resulting in the formation of a DNA-(3'-phosphotyrosyl)-enzyme intermediate and the expulsion of a 5'-OH DNA strand. The free DNA strand then rotates around the intact phosphodiester bond on the opposing strand, thus removing DNA supercoils. Finally, in the religation step, the DNA 5'-OH attacks the covalent intermediate to expel the active-site tyrosine and restore the DNA phosphodiester backbone. Topoisomerases 1 enzymes (TOP1A and TOP1B) are essential for plant survival. This is DNA topoisomerase 1 beta from Arabidopsis thaliana (Mouse-ear cress).